The chain runs to 302 residues: Acetylglutamate kinase (302 aa).

Residues 67-68, R89, and N189 each bind substrate; that span reads GG.

Belongs to the acetylglutamate kinase family. ArgB subfamily.

Its subcellular location is the cytoplasm. The enzyme catalyses N-acetyl-L-glutamate + ATP = N-acetyl-L-glutamyl 5-phosphate + ADP. The protein operates within amino-acid biosynthesis; L-arginine biosynthesis; N(2)-acetyl-L-ornithine from L-glutamate: step 2/4. Its function is as follows. Catalyzes the ATP-dependent phosphorylation of N-acetyl-L-glutamate. The polypeptide is Acetylglutamate kinase (Streptomyces clavuligerus).